The primary structure comprises 412 residues: Proline-rich protein 30 (412 aa).

2 stretches are compositionally biased toward polar residues: residues 1 to 15 (MLPQ…QTSV) and 23 to 39 (GFSQ…QPLS). Disordered regions lie at residues 1–88 (MLPQ…HPYS), 123–174 (PLTP…SNRQ), and 317–412 (RPKE…KSSV). Low complexity-rich tracts occupy residues 50-59 (PFSSTQSRRP), 126-142 (PSFS…PHSP), and 334-350 (QLPA…ADPV). A compositionally biased stretch (polar residues) spans 353-372 (TPSQTRSFRSAGLQSPNSPR).

The chain is Proline-rich protein 30 (PRR30) from Homo sapiens (Human).